The sequence spans 481 residues: 3-isopropylmalate dehydratase large subunit (481 aa).

Positions 363, 423, and 426 each coordinate [4Fe-4S] cluster. The segment at 432–459 is disordered; the sequence is DQLKPGERSASTSNRNFEGRQGPGGRTH.

Belongs to the aconitase/IPM isomerase family. LeuC type 1 subfamily. As to quaternary structure, heterodimer of LeuC and LeuD. Requires [4Fe-4S] cluster as cofactor.

The catalysed reaction is (2R,3S)-3-isopropylmalate = (2S)-2-isopropylmalate. It functions in the pathway amino-acid biosynthesis; L-leucine biosynthesis; L-leucine from 3-methyl-2-oxobutanoate: step 2/4. In terms of biological role, catalyzes the isomerization between 2-isopropylmalate and 3-isopropylmalate, via the formation of 2-isopropylmaleate. The chain is 3-isopropylmalate dehydratase large subunit from Corynebacterium glutamicum (strain R).